Consider the following 161-residue polypeptide: Cyclic pyranopterin monophosphate synthase (161 aa).

Substrate is bound by residues 75–77 (MCH) and 115–116 (ME). Asp130 is an active-site residue.

The protein belongs to the MoaC family. As to quaternary structure, homohexamer; trimer of dimers.

It carries out the reaction (8S)-3',8-cyclo-7,8-dihydroguanosine 5'-triphosphate = cyclic pyranopterin phosphate + diphosphate. It functions in the pathway cofactor biosynthesis; molybdopterin biosynthesis. Functionally, catalyzes the conversion of (8S)-3',8-cyclo-7,8-dihydroguanosine 5'-triphosphate to cyclic pyranopterin monophosphate (cPMP). This Bacillus cereus (strain G9842) protein is Cyclic pyranopterin monophosphate synthase.